We begin with the raw amino-acid sequence, 286 residues long: MNLKQKWDVYSRLTRLDRPIGTLLLMWPCLMALMLAAGGMPDLKVLIIFIIGVVIMRACGCIINDYADRDLDSFVERTKSRPLASGEISTKEALILFVVLGLSAFGLVLLLNGLVVKLSVVGIILTIIYPFTKRITNMPQMFLGVVWSWSIPMAYAAQTGEVPMEAWWLFAANWFWTVAYDTMYAMVDRDDDLKVGIKSTAILFGKYDRQIIGLFQIAALVCFIAAGWSAERGLLYGLGLLTFVGFSTYQQMLIFGRERAPCFKAFLNNNWAGLALFVGLGADYLI.

7 helical membrane passes run 21–40, 95–115, 142–162, 167–187, 211–231, 235–255, and 266–286; these read GTLLLMWPCLMALMLAAGGM, ILFVVLGLSAFGLVLLLNGLV, FLGVVWSWSIPMAYAAQTGEV, WWLFAANWFWTVAYDTMYAMV, IIGLFQIAALVCFIAAGWSAE, LYGLGLLTFVGFSTYQQMLIF, and FLNNNWAGLALFVGLGADYLI.

Belongs to the UbiA prenyltransferase family. Requires Mg(2+) as cofactor.

It localises to the cell inner membrane. The enzyme catalyses all-trans-octaprenyl diphosphate + 4-hydroxybenzoate = 4-hydroxy-3-(all-trans-octaprenyl)benzoate + diphosphate. It participates in cofactor biosynthesis; ubiquinone biosynthesis. In terms of biological role, catalyzes the prenylation of para-hydroxybenzoate (PHB) with an all-trans polyprenyl group. Mediates the second step in the final reaction sequence of ubiquinone-8 (UQ-8) biosynthesis, which is the condensation of the polyisoprenoid side chain with PHB, generating the first membrane-bound Q intermediate 3-octaprenyl-4-hydroxybenzoate. The polypeptide is 4-hydroxybenzoate octaprenyltransferase (Shewanella putrefaciens (strain CN-32 / ATCC BAA-453)).